Here is a 262-residue protein sequence, read N- to C-terminus: MGKSKLDAVLKEKTQAKKPIFVPYIMAGDGGIDNLNKRIQFLEEAGASAVELGIPFSDPVADGPVIQDAGQRALANKTTIGSVLEALESEKSQRNIPVVLMTYINPVWKYGFEQFARDCSQAGVDGIIIPDIPMEEEDDVASSLTQHDIAFIRLAAMTSTEDRLERIAKRSEGFLYAVSVTGTTGERAQHENDAFHFLEKLKQISHVPVLAGFGISTAERARELSAACDGVVVGSKIVQLFEQGDEDGIHSLIRESIGEKVI.

Residues Glu-51 and Asp-62 each act as proton acceptor in the active site.

The protein belongs to the TrpA family. In terms of assembly, tetramer of two alpha and two beta chains.

It catalyses the reaction (1S,2R)-1-C-(indol-3-yl)glycerol 3-phosphate + L-serine = D-glyceraldehyde 3-phosphate + L-tryptophan + H2O. It participates in amino-acid biosynthesis; L-tryptophan biosynthesis; L-tryptophan from chorismate: step 5/5. Functionally, the alpha subunit is responsible for the aldol cleavage of indoleglycerol phosphate to indole and glyceraldehyde 3-phosphate. This is Tryptophan synthase alpha chain from Oceanobacillus iheyensis (strain DSM 14371 / CIP 107618 / JCM 11309 / KCTC 3954 / HTE831).